The following is a 129-amino-acid chain: MTDHLKHIGVADPQRIEKYTLRTEAENDILKIYYKKEKGDLFHRSLKVKFPRLQKQLLVDSGGAKRYENTSEIAPNLLHVLDELDKITSKETEQVDVKEKILKDLRHLERVVNNKIKEIERDLDKLSSR.

It belongs to the UPF0325 family.

The polypeptide is UPF0325 protein HCH_00487 (Hahella chejuensis (strain KCTC 2396)).